A 64-amino-acid chain; its full sequence is Large ribosomal subunit protein bL28 (64 aa).

The protein belongs to the bacterial ribosomal protein bL28 family.

The polypeptide is Large ribosomal subunit protein bL28 (Persephonella marina (strain DSM 14350 / EX-H1)).